The primary structure comprises 124 residues: Large ribosomal subunit protein bL12 (124 aa).

This sequence belongs to the bacterial ribosomal protein bL12 family. Homodimer. Part of the ribosomal stalk of the 50S ribosomal subunit. Forms a multimeric L10(L12)X complex, where L10 forms an elongated spine to which 2 to 4 L12 dimers bind in a sequential fashion. Binds GTP-bound translation factors.

In terms of biological role, forms part of the ribosomal stalk which helps the ribosome interact with GTP-bound translation factors. Is thus essential for accurate translation. The protein is Large ribosomal subunit protein bL12 of Janthinobacterium sp. (strain Marseille) (Minibacterium massiliensis).